Here is a 387-residue protein sequence, read N- to C-terminus: Alanine racemase (387 aa).

K38 functions as the Proton acceptor; specific for D-alanine in the catalytic mechanism. K38 is subject to N6-(pyridoxal phosphate)lysine. Residue R136 coordinates substrate. Residue Y267 is the Proton acceptor; specific for L-alanine of the active site. Residue M315 coordinates substrate.

It belongs to the alanine racemase family. Requires pyridoxal 5'-phosphate as cofactor.

It catalyses the reaction L-alanine = D-alanine. The protein operates within amino-acid biosynthesis; D-alanine biosynthesis; D-alanine from L-alanine: step 1/1. Functionally, catalyzes the interconversion of L-alanine and D-alanine. May also act on other amino acids. The protein is Alanine racemase (alr) of Clostridium novyi (strain NT).